A 258-amino-acid polypeptide reads, in one-letter code: Small ribosomal subunit protein eS1 (258 aa).

Positions 235–258 (VASSGDAGSAVRRDGYEPPVQESV) are disordered.

The protein belongs to the eukaryotic ribosomal protein eS1 family. In terms of assembly, component of the small ribosomal subunit. Mature ribosomes consist of a small (40S) and a large (60S) subunit. The 40S subunit contains about 33 different proteins and 1 molecule of RNA (18S). The 60S subunit contains about 49 different proteins and 3 molecules of RNA (28S, 5.8S and 5S).

The protein resides in the cytoplasm. The protein is Small ribosomal subunit protein eS1 of Trichoplax adhaerens (Trichoplax reptans).